The following is a 181-amino-acid chain: Large ribosomal subunit protein uL5 (181 aa).

The protein belongs to the universal ribosomal protein uL5 family. As to quaternary structure, part of the 50S ribosomal subunit; part of the 5S rRNA/L5/L18/L25 subcomplex. Contacts the 5S rRNA and the P site tRNA. Forms a bridge to the 30S subunit in the 70S ribosome.

Its function is as follows. This is one of the proteins that bind and probably mediate the attachment of the 5S RNA into the large ribosomal subunit, where it forms part of the central protuberance. In the 70S ribosome it contacts protein S13 of the 30S subunit (bridge B1b), connecting the 2 subunits; this bridge is implicated in subunit movement. Contacts the P site tRNA; the 5S rRNA and some of its associated proteins might help stabilize positioning of ribosome-bound tRNAs. This Helicobacter pylori (strain G27) protein is Large ribosomal subunit protein uL5.